Here is a 596-residue protein sequence, read N- to C-terminus: uncharacterized protein (596 aa).

Residues 44–203 (KYLASQPRDF…PFVTYALDAD (160 aa)) form the Helicase ATP-binding domain. The Helicase C-terminal domain maps to 285 to 432 (RLRQLRTHVP…PHRESTDNPL (148 aa)). 2 disordered regions span residues 420-444 (LGKPHRESTDNPLGGNPATMTQTEQ) and 506-533 (EQLQKRTAAQQASSTPDRTSGAPASVHG). Residues 510 to 523 (KRTAAQQASSTPDR) are compositionally biased toward polar residues.

This sequence to M.tuberculosis Rv2917.

This is an uncharacterized protein from Mycobacterium leprae (strain TN).